The chain runs to 244 residues: Cobalt transport protein CbiM (244 aa).

A signal peptide spans 1-27; that stretch reads MVEGMLKTNFRLLFLLIFLLIPTPVLA. The next 6 membrane-spanning stretches (helical) occupy residues 36–56, 65–85, 102–122, 134–154, 168–188, and 196–216; these read PVKW…VGFI, GPGA…LSAL, LAAI…VLIF, TLGA…YGVY, IFLA…VQLA, and LFLS…PLAI.

It belongs to the CbiM family. In terms of assembly, forms an energy-coupling factor (ECF) transporter complex composed of an ATP-binding protein (A component, CbiO), a transmembrane protein (T component, CbiQ) and 2 possible substrate-capture proteins (S components, CbiM and CbiN) of unknown stoichimetry.

The protein resides in the cell membrane. It participates in cofactor biosynthesis; adenosylcobalamin biosynthesis. Its function is as follows. Part of the energy-coupling factor (ECF) transporter complex CbiMNOQ involved in cobalt import. This is Cobalt transport protein CbiM from Carboxydothermus hydrogenoformans (strain ATCC BAA-161 / DSM 6008 / Z-2901).